Consider the following 446-residue polypeptide: Enolase (446 aa).

Substrate contacts are provided by His164 and Glu173. Glu216 functions as the Proton donor in the catalytic mechanism. 3 residues coordinate Mg(2+): Asp251, Glu302, and Asp329. Substrate is bound by residues Glu302 and Asp329. Catalysis depends on Lys354, which acts as the Proton acceptor. Substrate contacts are provided by residues 381 to 384 and Lys405; that span reads SHRS.

The protein belongs to the enolase family. As to quaternary structure, homodimer. Mg(2+) serves as cofactor.

The protein resides in the cytoplasm. It carries out the reaction (2R)-2-phosphoglycerate = phosphoenolpyruvate + H2O. Its pathway is carbohydrate degradation; glycolysis; pyruvate from D-glyceraldehyde 3-phosphate: step 4/5. This Oryza sativa subsp. japonica (Rice) protein is Enolase (ENO1).